The following is a 92-amino-acid chain: uncharacterized protein (92 aa).

This is an uncharacterized protein from Bacillus subtilis (strain 168).